A 220-amino-acid polypeptide reads, in one-letter code: Deoxyribose-phosphate aldolase (220 aa).

Asp-89 serves as the catalytic Proton donor/acceptor. The active-site Schiff-base intermediate with acetaldehyde is the Lys-151. Residue Lys-180 is the Proton donor/acceptor of the active site.

The protein belongs to the DeoC/FbaB aldolase family. DeoC type 1 subfamily.

It is found in the cytoplasm. The catalysed reaction is 2-deoxy-D-ribose 5-phosphate = D-glyceraldehyde 3-phosphate + acetaldehyde. It participates in carbohydrate degradation; 2-deoxy-D-ribose 1-phosphate degradation; D-glyceraldehyde 3-phosphate and acetaldehyde from 2-deoxy-alpha-D-ribose 1-phosphate: step 2/2. Functionally, catalyzes a reversible aldol reaction between acetaldehyde and D-glyceraldehyde 3-phosphate to generate 2-deoxy-D-ribose 5-phosphate. The sequence is that of Deoxyribose-phosphate aldolase from Staphylococcus epidermidis (strain ATCC 35984 / DSM 28319 / BCRC 17069 / CCUG 31568 / BM 3577 / RP62A).